Reading from the N-terminus, the 446-residue chain is Oxysterols receptor LXR-beta (446 aa).

Residues Met-1–Ala-69 form a disordered region. The tract at residues Met-1 to Glu-76 is transactivation AF-1; required for ligand-independent transactivation function. The segment covering Ser-17 to Thr-28 has biased composition (low complexity). Residues His-75–Ser-152 constitute a DNA-binding region (nuclear receptor). 2 NR C4-type zinc fingers span residues Cys-78–Cys-98 and Cys-116–Cys-140. The tract at residues Lys-159–Glu-201 is disordered. Residues Pro-175–Gly-196 show a composition bias toward low complexity. A transactivation AF-2; required for ligand-dependent transactivation function; mediates interaction with CCAR2 region spans residues Leu-205–Glu-446. Residues Ala-208–Glu-446 form the NR LBD domain. Glycyl lysine isopeptide (Lys-Gly) (interchain with G-Cter in SUMO2) cross-links involve residues Lys-395 and Lys-433.

It belongs to the nuclear hormone receptor family. NR1 subfamily. As to quaternary structure, forms a heterodimer with RXR. Interacts with CCAR2 (via N-terminus) in a ligand-independent manner. Interacts (when sumoylated) with GPS2; interaction with GPS2 onto hepatic acute phase protein promoters prevents N-Cor corepressor complex dissociation. Interacts with ABCA12 and ABCA1; this interaction is required for ABCA1 localization to the cell surface and is necessary for its normal activity and stability. Sumoylated by SUMO2 at Lys-395 and Lys-433 during the hepatic acute phase response, leading to promote interaction with GPS2 and prevent N-Cor corepressor complex dissociation. In terms of tissue distribution, ubiquitous.

It localises to the nucleus. Nuclear receptor that exhibits a ligand-dependent transcriptional activation activity. Binds preferentially to double-stranded oligonucleotide direct repeats having the consensus half-site sequence 5'-AGGTCA-3' and 4-nt spacing (DR-4). Regulates cholesterol uptake through MYLIP-dependent ubiquitination of LDLR, VLDLR and LRP8; DLDLR and LRP8. Interplays functionally with RORA for the regulation of genes involved in liver metabolism. Induces LPCAT3-dependent phospholipid remodeling in endoplasmic reticulum (ER) membranes of hepatocytes, driving SREBF1 processing and lipogenesis. Via LPCAT3, triggers the incorporation of arachidonate into phosphatidylcholines of ER membranes, increasing membrane dynamics and enabling triacylglycerols transfer to nascent very low-density lipoprotein (VLDL) particles. Via LPCAT3 also counteracts lipid-induced ER stress response and inflammation, likely by modulating SRC kinase membrane compartmentalization and limiting the synthesis of lipid inflammatory mediators. Plays an anti-inflammatory role during the hepatic acute phase response by acting as a corepressor: inhibits the hepatic acute phase response by preventing dissociation of the N-Cor corepressor complex. The chain is Oxysterols receptor LXR-beta (Nr1h2) from Mus musculus (Mouse).